Here is a 675-residue protein sequence, read N- to C-terminus: Probable metal-nicotianamine transporter YSL16 (675 aa).

The span at 1-11 (MDRHALGGGGA) shows a compositional bias: gly residues. The interval 1-20 (MDRHALGGGGALEIEKTPEA) is disordered. The next 14 helical transmembrane spans lie at 50 to 70 (GMVAALLIGVVYTVIVMKLSL), 73 to 93 (GLIPTLNVSAALLAFLALRGW), 118 to 138 (CAVACYTIGYGGGFGSFLLGL), 162 to 182 (GIGWMTGFLLSTSFVGLLTLL), 231 to 251 (ISFLWSFFQWFYTGGDVCGFL), 283 to 303 (LVNLSLLFGAILSWGIMWPLI), 329 to 349 (FICIALLVGDGFYNFVKVIVV), 393 to 413 (MAYTGYTLLSVIAVVLIPVMF), 421 to 441 (VIIAYLLAPALGFCNAYGTGL), 453 to 473 (IALFIFAAWAGKDDGVVAGLV), 507 to 527 (VGQVVGTLMGCVVAPLTFFLF), 567 to 587 (LQLCAGFFAFAVLANLARDFL), 605 to 625 (FLVGASFAIDMCAGSLVVFLW), and 633 to 653 (AALLVPAVASGLICGDGIWTF).

The protein belongs to the YSL (TC 2.A.67.2) family. In terms of tissue distribution, expressed in roots.

Its subcellular location is the membrane. Functionally, may be involved in the transport of nicotianamine-chelated metals. This is Probable metal-nicotianamine transporter YSL16 (YSL16) from Oryza sativa subsp. japonica (Rice).